Consider the following 415-residue polypeptide: Ankyrin repeat domain-containing protein 10 (415 aa).

ANK repeat units follow at residues S20–L49, Y56–V85, Y90–K119, and E123–L152. Over residues T303–G325 the composition is skewed to polar residues. Positions T303–E330 are disordered.

The chain is Ankyrin repeat domain-containing protein 10 (Ankrd10) from Mus musculus (Mouse).